A 456-amino-acid chain; its full sequence is tRNA (guanine(37)-N(1))-methyltransferase (456 aa).

Residues His-246, 284–285 (DL), 310–311 (DG), and Asn-336 each bind S-adenosyl-L-methionine.

Belongs to the class I-like SAM-binding methyltransferase superfamily. TRM5/TYW2 family. Monomer.

The protein resides in the mitochondrion matrix. Its subcellular location is the nucleus. It is found in the cytoplasm. The catalysed reaction is guanosine(37) in tRNA + S-adenosyl-L-methionine = N(1)-methylguanosine(37) in tRNA + S-adenosyl-L-homocysteine + H(+). In terms of biological role, specifically methylates the N1 position of guanosine-37 in various cytoplasmic and mitochondrial tRNAs. Methylation is not dependent on the nature of the nucleoside 5' of the target nucleoside. This is the first step in the biosynthesis of wybutosine (yW), a modified base adjacent to the anticodon of tRNAs and required for accurate decoding. This chain is tRNA (guanine(37)-N(1))-methyltransferase, found in Ciona intestinalis (Transparent sea squirt).